A 353-amino-acid chain; its full sequence is S-adenosylmethionine:tRNA ribosyltransferase-isomerase (353 aa).

It belongs to the QueA family. In terms of assembly, monomer.

It is found in the cytoplasm. It catalyses the reaction 7-aminomethyl-7-carbaguanosine(34) in tRNA + S-adenosyl-L-methionine = epoxyqueuosine(34) in tRNA + adenine + L-methionine + 2 H(+). It functions in the pathway tRNA modification; tRNA-queuosine biosynthesis. In terms of biological role, transfers and isomerizes the ribose moiety from AdoMet to the 7-aminomethyl group of 7-deazaguanine (preQ1-tRNA) to give epoxyqueuosine (oQ-tRNA). This Cupriavidus metallidurans (strain ATCC 43123 / DSM 2839 / NBRC 102507 / CH34) (Ralstonia metallidurans) protein is S-adenosylmethionine:tRNA ribosyltransferase-isomerase.